We begin with the raw amino-acid sequence, 454 residues long: Arginine biosynthesis bifunctional protein ArgJ, mitochondrial (454 aa).

Residues threonine 184, lysine 213, threonine 224, glutamate 311, asparagine 449, and threonine 454 each contribute to the substrate site. The active-site Nucleophile is threonine 224.

It belongs to the ArgJ family. As to quaternary structure, heterodimer of an alpha and a beta chain. The alpha and beta chains are autoproteolytically processed from a single precursor protein within the mitochondrion.

It localises to the mitochondrion matrix. The enzyme catalyses N(2)-acetyl-L-ornithine + L-glutamate = N-acetyl-L-glutamate + L-ornithine. It carries out the reaction L-glutamate + acetyl-CoA = N-acetyl-L-glutamate + CoA + H(+). It participates in amino-acid biosynthesis; L-arginine biosynthesis; L-ornithine and N-acetyl-L-glutamate from L-glutamate and N(2)-acetyl-L-ornithine (cyclic): step 1/1. Its pathway is amino-acid biosynthesis; L-arginine biosynthesis; N(2)-acetyl-L-ornithine from L-glutamate: step 1/4. Functionally, catalyzes two activities which are involved in the cyclic version of arginine biosynthesis: the synthesis of acetylglutamate from glutamate and acetyl-CoA, and of ornithine by transacetylation between acetylornithine and glutamate. In Aspergillus clavatus (strain ATCC 1007 / CBS 513.65 / DSM 816 / NCTC 3887 / NRRL 1 / QM 1276 / 107), this protein is Arginine biosynthesis bifunctional protein ArgJ, mitochondrial.